A 398-amino-acid polypeptide reads, in one-letter code: Acetate kinase 1 (398 aa).

N10 is a binding site for Mg(2+). Residue K17 participates in ATP binding. R89 provides a ligand contact to substrate. The active-site Proton donor/acceptor is D146. ATP is bound by residues 206 to 210, 281 to 283, and 329 to 333; these read HLGNG, DCR, and GIGEN. E384 serves as a coordination point for Mg(2+).

The protein belongs to the acetokinase family. As to quaternary structure, homodimer. Mg(2+) is required as a cofactor. It depends on Mn(2+) as a cofactor.

The protein resides in the cytoplasm. It catalyses the reaction acetate + ATP = acetyl phosphate + ADP. It functions in the pathway metabolic intermediate biosynthesis; acetyl-CoA biosynthesis; acetyl-CoA from acetate: step 1/2. Its function is as follows. Catalyzes the formation of acetyl phosphate from acetate and ATP. Can also catalyze the reverse reaction. This Neisseria meningitidis serogroup B (strain ATCC BAA-335 / MC58) protein is Acetate kinase 1.